We begin with the raw amino-acid sequence, 197 residues long: Phosphoheptose isomerase (197 aa).

Residues 34 to 196 (MVNCLLGGNK…DRTLFPQDEQ (163 aa)) form the SIS domain. 49-51 (NGG) contributes to the substrate binding site. 2 residues coordinate Zn(2+): His-58 and Glu-62. Residues Glu-62, 91 to 92 (ND), 117 to 119 (STS), Ser-122, and Gln-172 contribute to the substrate site. Zn(2+)-binding residues include Gln-172 and His-180.

The protein belongs to the SIS family. GmhA subfamily. Homotetramer. Zn(2+) is required as a cofactor.

It localises to the cytoplasm. It carries out the reaction 2 D-sedoheptulose 7-phosphate = D-glycero-alpha-D-manno-heptose 7-phosphate + D-glycero-beta-D-manno-heptose 7-phosphate. It participates in carbohydrate biosynthesis; D-glycero-D-manno-heptose 7-phosphate biosynthesis; D-glycero-alpha-D-manno-heptose 7-phosphate and D-glycero-beta-D-manno-heptose 7-phosphate from sedoheptulose 7-phosphate: step 1/1. Functionally, catalyzes the isomerization of sedoheptulose 7-phosphate in D-glycero-D-manno-heptose 7-phosphate. In Shewanella pealeana (strain ATCC 700345 / ANG-SQ1), this protein is Phosphoheptose isomerase.